A 177-amino-acid chain; its full sequence is Large ribosomal subunit protein uL6 (177 aa).

This sequence belongs to the universal ribosomal protein uL6 family. As to quaternary structure, part of the 50S ribosomal subunit.

In terms of biological role, this protein binds to the 23S rRNA, and is important in its secondary structure. It is located near the subunit interface in the base of the L7/L12 stalk, and near the tRNA binding site of the peptidyltransferase center. The protein is Large ribosomal subunit protein uL6 of Chelativorans sp. (strain BNC1).